The following is a 104-amino-acid chain: Large ribosomal subunit protein uL24 (104 aa).

It belongs to the universal ribosomal protein uL24 family. Part of the 50S ribosomal subunit.

In terms of biological role, one of two assembly initiator proteins, it binds directly to the 5'-end of the 23S rRNA, where it nucleates assembly of the 50S subunit. Functionally, one of the proteins that surrounds the polypeptide exit tunnel on the outside of the subunit. This Anaplasma phagocytophilum (strain HZ) protein is Large ribosomal subunit protein uL24.